We begin with the raw amino-acid sequence, 1282 residues long: Protein crumbs homolog 2 (1282 aa).

The signal sequence occupies residues 1-35 (MALVGPRIWGPRRDIYPLLLLLLLLLLLLLPWVPA). Over 36-1221 (GLVPPETPSV…PLPLPFPLLE (1186 aa)) the chain is Extracellular. The EGF-like 1 domain occupies 71 to 110 (ELGGCATQPCHHGALCVPQGPDPNSFRCYCVPGFQGPHCE). Disulfide bonds link C75/C86, C80/C98, C100/C109, C116/C127, C121/C136, C138/C147, C154/C165, C159/C174, C176/C185, C192/C203, C197/C212, C214/C224, C231/C242, C236/C251, C253/C262, C269/C280, C274/C310, C312/C321, C328/C339, C333/C348, C350/C359, C366/C377, C371/C386, C388/C397, C404/C415, C409/C428, and C430/C439. One can recognise an EGF-like 2; calcium-binding domain in the interval 112 to 148 (DIDECASRPCQHGGTCQNLADHYECHCPLGYAGVTCE). The EGF-like 3; calcium-binding domain maps to 150–186 (EVDECSSAPCLHGGSCLDGVGSYRCVCAPGYAGANCQ). The EGF-like 4; calcium-binding domain occupies 188-225 (DVDECQSQPCAHGGVCHDLVNGFRCDCADTGYEGARCE). 2 consecutive EGF-like domains span residues 227–263 (EVLE…ERCE) and 265–322 (DEDE…NDCS). N239 carries an N-linked (GlcNAc...) asparagine glycan. S271 is a glycosylation site (O-linked (Glc...) serine). In terms of domain architecture, EGF-like 7; calcium-binding spans 324 to 360 (DVDECASGPCLNGGSCQDLPNGFQCYCQDGYTGLTCQ). An EGF-like 8; calcium-binding domain is found at 362 to 398 (DMDECQSEPCLHGGTCSDTVAGYICQCPEAWGGHDCS). The 41-residue stretch at 400–440 (QLTGCQGHTCPLAATCIPTFKSGLHGYFCRCPPGTYGPFCG) folds into the EGF-like 9 domain. An N-linked (GlcNAc...) asparagine glycan is attached at N442. The 164-residue stretch at 444–607 (TFSVVSGSSV…ELKGTVLLGC (164 aa)) folds into the Laminin G-like 1 domain. Intrachain disulfides connect C583/C607, C613/C624, C618/C633, and C635/C644. Positions 609-645 (RREPCQPLPCAHGGACVDLWTHFRCDCPRPYRGATCT) constitute an EGF-like 10 domain. The Laminin G-like 2 domain occupies 649–808 (PAATFGLGGA…GQSSNLTQGC (160 aa)). N-linked (GlcNAc...) asparagine glycosylation is found at N672, N693, N789, and N803. 4 disulfides stabilise this stretch: C769/C808, C814/C825, C819/C834, and C836/C845. The EGF-like 11 domain maps to 810–846 (SEDTCNPNPCFNGGTCHVTWNDFYCTCSENFTGPTCA). N-linked (GlcNAc...) asparagine glycosylation is found at N839, N889, N929, and N1006. Residues 872–1051 (VAEATFREGP…PGSPAVSLGC (180 aa)) enclose the Laminin G-like 3 domain. Intrachain disulfides connect C1010-C1051, C1057-C1068, C1062-C1077, C1079-C1088, C1095-C1105, C1100-C1115, C1117-C1126, C1135-C1147, C1141-C1156, C1158-C1167, C1174-C1185, C1179-C1194, and C1196-C1205. EGF-like domains are found at residues 1053–1089 (GGPV…PRCE), 1091–1127 (RADP…PRCR), 1131–1168 (LPQG…LRCQ), and 1170–1206 (LDKP…QFCE). 2 N-linked (GlcNAc...) asparagine glycosylation sites follow: N1138 and N1155. The chain crosses the membrane as a helical span at residues 1222–1242 (VAVPAACACLLLLLLGLLSGI). The Cytoplasmic segment spans residues 1243–1282 (LAARKRRQSEGTYSPSQQEVAGARLEMDSVLKVPPEERLI). Positions 1246 to 1282 (RKRRQSEGTYSPSQQEVAGARLEMDSVLKVPPEERLI) are interaction with EPB41L5.

Belongs to the Crumbs protein family. In terms of assembly, interacts (via intracellular domain) with EPB41L5. Post-translationally, O-glucosylated by POGLUT1 at Ser-271; consists of an O-glucose trisaccharide, in which the O-glucose is elongated by the addition of two xylose residues. O-glucosylation is required for localization at the plasma membrane. In the adult eye, strongly expressed in the outer nuclear layer, containing the cell bodies of the photoreceptor cells, and in the inner nuclear layer, containing the cell bodies of the horizontal, bipolar, amacrine, and Mueller glial cells. Also expressed in some cells in the ganglion cell layer (or may be displaced amacrine cells rather than ganglion cells).

It is found in the apical cell membrane. Functionally, apical polarity protein that plays a central role during the epithelial-to-mesenchymal transition (EMT) at gastrulation, when newly specified mesodermal cells move inside the embryo. Acts by promoting cell ingression, the process by which cells leave the epithelial epiblast and move inside the embryo to form a new tissue layer. The anisotropic distribution of CRB2 and MYH10/myosin-IIB at cell edges define which cells will ingress: cells with high apical CRB2 are probably extruded from the epiblast by neighboring cells with high levels of apical MYH10/myosin-IIB. Also required for maintenance of the apical polarity complex during development of the cortex. The sequence is that of Protein crumbs homolog 2 from Mus musculus (Mouse).